The following is a 131-amino-acid chain: Fumarate reductase subunit C (131 aa).

The next 3 helical transmembrane spans lie at 30 to 50 (EGTA…LFAL), 57 to 77 (WMGF…LITL), and 109 to 129 (IIKG…YVAL).

The protein belongs to the FrdC family. In terms of assembly, part of an enzyme complex containing four subunits: a flavoprotein (FrdA), an iron-sulfur protein (FrdB), and two hydrophobic anchor proteins (FrdC and FrdD).

It localises to the cell inner membrane. Its function is as follows. Two distinct, membrane-bound, FAD-containing enzymes are responsible for the catalysis of fumarate and succinate interconversion; fumarate reductase is used in anaerobic growth, and succinate dehydrogenase is used in aerobic growth. Anchors the catalytic components of the fumarate reductase complex to the cell inner membrane, binds quinones. The polypeptide is Fumarate reductase subunit C (Salmonella choleraesuis (strain SC-B67)).